We begin with the raw amino-acid sequence, 580 residues long: E3 ubiquitin-protein ligase TRIM45 (580 aa).

The segment at 29 to 98 adopts an RING-type zinc-finger fold; that stretch reads CPLCMGLFKA…QIGILCPVCD (70 aa). 2 B box-type zinc fingers span residues 130–176 and 186–227; these read GQGL…MVDL and GKPI…CDFT. 8 residues coordinate Zn(2+): cysteine 135, cysteine 138, cysteine 158, histidine 162, cysteine 191, histidine 194, cysteine 214, and histidine 219. The stretch at 281–335 forms a coiled coil; sequence SEGYIKAIEEHRDKLLKQLEDIRVQKENSLQLQKAQLEQLLADMRTGVEFTEHLL. A Filamin repeat occupies 394–497; the sequence is TKEVDPAKCV…VQGSPFTVTV (104 aa).

This sequence belongs to the TRIM/RBCC family.

The protein localises to the cytoplasm. It localises to the nucleus. It carries out the reaction S-ubiquitinyl-[E2 ubiquitin-conjugating enzyme]-L-cysteine + [acceptor protein]-L-lysine = [E2 ubiquitin-conjugating enzyme]-L-cysteine + N(6)-ubiquitinyl-[acceptor protein]-L-lysine.. Functionally, E3 ubiquitin-protein ligase that plays a role in the regulation of inflammatory response. Mechanistically, mediates the 'Lys-48'-linked polyubiquitination of TAB2, a regulatory protein of the kinase TAK1, leading to its degradation via the proteasomal pathway and inhibition of the TLR-mediated inflammatory immune response. May act as a transcriptional repressor in mitogen-activated protein kinase signaling pathway. The sequence is that of E3 ubiquitin-protein ligase TRIM45 (TRIM45) from Bos taurus (Bovine).